Here is a 525-residue protein sequence, read N- to C-terminus: Light-independent protochlorophyllide reductase subunit B (525 aa).

Aspartate 36 provides a ligand contact to [4Fe-4S] cluster. Aspartate 290 acts as the Proton donor in catalysis. Glycine 425–leucine 426 provides a ligand contact to substrate.

It belongs to the ChlB/BchB/BchZ family. Protochlorophyllide reductase is composed of three subunits; ChlL, ChlN and ChlB. Forms a heterotetramer of two ChlB and two ChlN subunits. [4Fe-4S] cluster serves as cofactor.

The enzyme catalyses chlorophyllide a + oxidized 2[4Fe-4S]-[ferredoxin] + 2 ADP + 2 phosphate = protochlorophyllide a + reduced 2[4Fe-4S]-[ferredoxin] + 2 ATP + 2 H2O. The protein operates within porphyrin-containing compound metabolism; chlorophyll biosynthesis (light-independent). Functionally, component of the dark-operative protochlorophyllide reductase (DPOR) that uses Mg-ATP and reduced ferredoxin to reduce ring D of protochlorophyllide (Pchlide) to form chlorophyllide a (Chlide). This reaction is light-independent. The NB-protein (ChlN-ChlB) is the catalytic component of the complex. The chain is Light-independent protochlorophyllide reductase subunit B from Prochlorococcus marinus (strain MIT 9312).